The sequence spans 393 residues: NAD(P)H-quinone oxidoreductase subunit H, chloroplastic (393 aa).

Belongs to the complex I 49 kDa subunit family. In terms of assembly, NDH is composed of at least 16 different subunits, 5 of which are encoded in the nucleus.

The protein localises to the plastid. The protein resides in the chloroplast thylakoid membrane. The enzyme catalyses a plastoquinone + NADH + (n+1) H(+)(in) = a plastoquinol + NAD(+) + n H(+)(out). It catalyses the reaction a plastoquinone + NADPH + (n+1) H(+)(in) = a plastoquinol + NADP(+) + n H(+)(out). Functionally, NDH shuttles electrons from NAD(P)H:plastoquinone, via FMN and iron-sulfur (Fe-S) centers, to quinones in the photosynthetic chain and possibly in a chloroplast respiratory chain. The immediate electron acceptor for the enzyme in this species is believed to be plastoquinone. Couples the redox reaction to proton translocation, and thus conserves the redox energy in a proton gradient. In Huperzia lucidula (Shining clubmoss), this protein is NAD(P)H-quinone oxidoreductase subunit H, chloroplastic.